Consider the following 642-residue polypeptide: Wall-associated receptor kinase-like 6 (642 aa).

An N-terminal signal peptide occupies residues 1-28; it reads MKKTKTYQVFCIAALSVLTLQLINGSSA. Over 29–357 the chain is Extracellular; it reads ATPPPPNSNS…PKITKPEKAS (329 aa). Asparagine 37, asparagine 72, asparagine 95, asparagine 137, asparagine 216, asparagine 240, and asparagine 276 each carry an N-linked (GlcNAc...) asparagine glycan. The interval 289–346 is atypical EGF-like; that stretch reads CSCEYDYFSGMSYRICYCNYGYTGNPYLRHGCIDIDECEGHHNCGEGTCVNMPGTHSC. 3 cysteine pairs are disulfide-bonded: cysteine 291–cysteine 304, cysteine 326–cysteine 337, and cysteine 332–cysteine 346. The helical transmembrane segment at 358–378 threads the bilayer; it reads VLQGVLISLGVLLFVLGILGL. At 379 to 642 the chain is on the cytoplasmic side; that stretch reads YKFIKKRTRI…KPLSRKRIGN (264 aa). Residues 432 to 642 enclose the Protein kinase domain; it reads FSMNRVLGQG…KPLSRKRIGN (211 aa). Residues 438–446 and lysine 460 each bind ATP; that span reads LGQGGQGTV. The residue at position 505 (tyrosine 505) is a Phosphotyrosine. Catalysis depends on aspartate 559, which acts as the Proton acceptor. 2 positions are modified to phosphothreonine: threonine 593 and threonine 598. Tyrosine 606 is modified (phosphotyrosine).

This sequence belongs to the protein kinase superfamily. Ser/Thr protein kinase family. In terms of tissue distribution, slightly expressed in the whole plant.

Its subcellular location is the membrane. It catalyses the reaction L-seryl-[protein] + ATP = O-phospho-L-seryl-[protein] + ADP + H(+). It carries out the reaction L-threonyl-[protein] + ATP = O-phospho-L-threonyl-[protein] + ADP + H(+). In terms of biological role, serine/threonine-protein kinase that may function as a signaling receptor of extracellular matrix component. The sequence is that of Wall-associated receptor kinase-like 6 (WAKL6) from Arabidopsis thaliana (Mouse-ear cress).